A 149-amino-acid chain; its full sequence is UPF0178 protein CPR_2251 (149 aa).

Belongs to the UPF0178 family.

This is UPF0178 protein CPR_2251 from Clostridium perfringens (strain SM101 / Type A).